Reading from the N-terminus, the 330-residue chain is Phospho-N-acetylmuramoyl-pentapeptide-transferase (330 aa).

10 helical membrane-spanning segments follow: residues serine 3–isoleucine 23, threonine 49–alanine 69, proline 71–tyrosine 91, phenylalanine 111–valine 131, valine 145–valine 165, glycine 179–glutamate 199, leucine 204–histidine 224, isoleucine 228–leucine 248, proline 256–phenylalanine 276, and phenylalanine 307–tyrosine 327.

It belongs to the glycosyltransferase 4 family. MraY subfamily. Requires Mg(2+) as cofactor.

It is found in the cell membrane. It catalyses the reaction UDP-N-acetyl-alpha-D-muramoyl-L-alanyl-gamma-D-glutamyl-meso-2,6-diaminopimeloyl-D-alanyl-D-alanine + di-trans,octa-cis-undecaprenyl phosphate = di-trans,octa-cis-undecaprenyl diphospho-N-acetyl-alpha-D-muramoyl-L-alanyl-D-glutamyl-meso-2,6-diaminopimeloyl-D-alanyl-D-alanine + UMP. It participates in cell wall biogenesis; peptidoglycan biosynthesis. Catalyzes the initial step of the lipid cycle reactions in the biosynthesis of the cell wall peptidoglycan: transfers peptidoglycan precursor phospho-MurNAc-pentapeptide from UDP-MurNAc-pentapeptide onto the lipid carrier undecaprenyl phosphate, yielding undecaprenyl-pyrophosphoryl-MurNAc-pentapeptide, known as lipid I. This Rubrobacter xylanophilus (strain DSM 9941 / JCM 11954 / NBRC 16129 / PRD-1) protein is Phospho-N-acetylmuramoyl-pentapeptide-transferase.